We begin with the raw amino-acid sequence, 215 residues long: Probable GTP-binding protein EngB (215 aa).

Residues 30 to 204 (EGLEVAFAGR…QMVLAQWLGL (175 aa)) form the EngB-type G domain. GTP is bound by residues 38–45 (GRSNAGKS), 64–68 (GRTQL), 82–85 (DLPG), 149–152 (TKAD), and 182–185 (LFSA). Mg(2+) contacts are provided by S45 and T66.

Belongs to the TRAFAC class TrmE-Era-EngA-EngB-Septin-like GTPase superfamily. EngB GTPase family. The cofactor is Mg(2+).

Functionally, necessary for normal cell division and for the maintenance of normal septation. The protein is Probable GTP-binding protein EngB of Pseudomonas aeruginosa (strain ATCC 15692 / DSM 22644 / CIP 104116 / JCM 14847 / LMG 12228 / 1C / PRS 101 / PAO1).